Reading from the N-terminus, the 248-residue chain is Large ribosomal subunit protein uL4 (248 aa).

Positions 44–109 (QDTGTDEYAG…LDINTKERKL (66 aa)) are disordered. A compositionally biased stretch (basic and acidic residues) spans 92–109 (PKAEKDRGLDINTKERKL).

This sequence belongs to the universal ribosomal protein uL4 family. In terms of assembly, part of the 50S ribosomal subunit.

One of the primary rRNA binding proteins, this protein initially binds near the 5'-end of the 23S rRNA. It is important during the early stages of 50S assembly. It makes multiple contacts with different domains of the 23S rRNA in the assembled 50S subunit and ribosome. Functionally, forms part of the polypeptide exit tunnel. This Natronomonas pharaonis (strain ATCC 35678 / DSM 2160 / CIP 103997 / JCM 8858 / NBRC 14720 / NCIMB 2260 / Gabara) (Halobacterium pharaonis) protein is Large ribosomal subunit protein uL4.